Reading from the N-terminus, the 662-residue chain is p-hydroxybenzoic acid efflux pump subunit AaeB (662 aa).

The next 11 helical transmembrane spans lie at 22 to 42, 52 to 72, 76 to 96, 102 to 122, 129 to 149, 161 to 181, 378 to 398, 415 to 435, 439 to 459, 465 to 485, and 491 to 511; these read FAFK…HLQL, AAIV…SGAI, GMLR…IIIA, VVML…SSLV, IFGL…GTPL, EIVL…PRSI, LFWL…IAVV, FLFG…FIMP, QSML…GLEV, GSLG…PMTF, and LDSA…IMLI.

This sequence belongs to the aromatic acid exporter ArAE (TC 2.A.85) family.

It is found in the cell inner membrane. In terms of biological role, forms an efflux pump with AaeA. Could function as a metabolic relief valve, allowing to eliminate certain compounds when they accumulate to high levels in the cell. The sequence is that of p-hydroxybenzoic acid efflux pump subunit AaeB from Pectobacterium atrosepticum (strain SCRI 1043 / ATCC BAA-672) (Erwinia carotovora subsp. atroseptica).